Reading from the N-terminus, the 144-residue chain is RNA-binding protein 1 (144 aa).

The RRM domain maps to 11-84 (CKVYVGNLGS…TRIRVEMSSG (74 aa)). The segment at 78 to 115 (RVEMSSGRSRDRRRGEGGSSGRSGSGRYRITPSARTTS) is disordered.

This sequence belongs to the splicing factor SR family. In terms of assembly, interacts with x16 (via Arg/Ser-rich region). In terms of processing, extensively phosphorylated on serine residues in the RS domain. Post-translationally, the tandem heptapeptide repeats in the C-terminal domain (CTD) can be highly phosphorylated. The phosphorylation activates Pol II. Phosphorylation occurs at residues 'Ser-2', 'Ser-5' and 'Ser-7' of the heptapeptide repeat and is mediated by P-TEFb. Dephosphorylated by the INTAC complex when transcripts are unfavorably configured for transcriptional elongation, leading to premature transcription termination: dephosphorylation is mediated by the mts/PP2A component of the INTAC complex. As to expression, ubiquitous.

Its subcellular location is the nucleus. Its function is as follows. Contributes to the activation of female-specific DSX splicing in vivo by recognizing the RBP1 target sequences within the purine-rich polypyrimidine tract of the female-specific 3' splice site. The sequence is that of RNA-binding protein 1 (Rbp1) from Drosophila melanogaster (Fruit fly).